The chain runs to 338 residues: tRNA N6-adenosine threonylcarbamoyltransferase (338 aa).

Fe cation contacts are provided by His-110 and His-114. Substrate is bound by residues Val-132–Gly-136, Asp-165, Gly-178, and Asn-274. Fe cation is bound at residue Asp-298.

It belongs to the KAE1 / TsaD family. It depends on Fe(2+) as a cofactor.

Its subcellular location is the cytoplasm. The catalysed reaction is L-threonylcarbamoyladenylate + adenosine(37) in tRNA = N(6)-L-threonylcarbamoyladenosine(37) in tRNA + AMP + H(+). Required for the formation of a threonylcarbamoyl group on adenosine at position 37 (t(6)A37) in tRNAs that read codons beginning with adenine. Is involved in the transfer of the threonylcarbamoyl moiety of threonylcarbamoyl-AMP (TC-AMP) to the N6 group of A37, together with TsaE and TsaB. TsaD likely plays a direct catalytic role in this reaction. This Borrelia recurrentis (strain A1) protein is tRNA N6-adenosine threonylcarbamoyltransferase.